Consider the following 130-residue polypeptide: Small ribosomal subunit protein uS8 (130 aa).

This sequence belongs to the universal ribosomal protein uS8 family. As to quaternary structure, part of the 30S ribosomal subunit.

Functionally, one of the primary rRNA binding proteins, it binds directly to 16S rRNA central domain where it helps coordinate assembly of the platform of the 30S subunit. This chain is Small ribosomal subunit protein uS8, found in Methanocella arvoryzae (strain DSM 22066 / NBRC 105507 / MRE50).